The following is a 259-amino-acid chain: MLMVISPAKTLDYETPPATPRFTQPEHLDHAQELIAQLRDFSPAQIAELMHLSDKLAGLNAARFGSWERPFNPSNAKQALLAFKGDVYTGLHAEDFSEDDFDFAQAHLRMLSGLYGVLRPLDLMQPYRLEMGTKLVNGRGKDLYAFWGERISAWLNQALAAQGDDVLLNLASNEYFGAVKRKALNARIIDTEFKDLKNGQYKIISFYAKKARGLMARYVIKERLTNPEGLKDFNYQGYRYSAEHSKADSLVFLRDQPLD.

Belongs to the UPF0246 family.

The protein is UPF0246 protein Pmen_1032 of Ectopseudomonas mendocina (strain ymp) (Pseudomonas mendocina).